Consider the following 213-residue polypeptide: MAAFTGTTDKCKACDKTVYVMDLMTLEGMPYHKSCFRCSHCNGTLVICNYSSMDGVLYCKTHFEQLFKESGNFSKNFQTAGKTEKSNDATKAPNRLSSFFSGTQDKCAACKKTVYPLEKMTMEGESYHKTCFRCAHSGCPLTHSSYAALDGVLYCKVHFSQLFLEKGNYNHVLQAAANHRRSTAEEDKTEPKEDEANPTEEETSDAAAEEHES.

2 LIM zinc-binding domains span residues 9 to 69 and 105 to 165; these read DKCK…LFKE and DKCA…LFLE. Residues 177–213 are disordered; sequence ANHRRSTAEEDKTEPKEDEANPTEEETSDAAAEEHES. Basic and acidic residues predominate over residues 182 to 195; it reads STAEEDKTEPKEDE.

As to quaternary structure, interacts with F-actin. In terms of tissue distribution, exclusively expressed in pollen grains.

It is found in the cytoplasm. The protein localises to the cytoskeleton. Binds to actin filaments and promotes cross-linking into thick bundles. Has an actin-stabilizing activity. Associates predominantly with long and dynamic actin bundles in the shank of growing pollen tubes. The actin regulatory activities are inhibited by pH &gt; 6.8 and/or high [Ca(2+)]. The chain is LIM domain-containing protein PLIM2c from Arabidopsis thaliana (Mouse-ear cress).